A 257-amino-acid polypeptide reads, in one-letter code: Early E1A protein (257 aa).

Disordered stretches follow at residues 26-46 (NATMGDDHPEPPTPFGTPSLH) and 75-103 (LAAEEASSPSSDSDSSLHTPRHDRGEKEI). The tract at residues 43–51 (PSLHDLYDL) is interaction with RB1 in competition with E2F1. A compositionally biased stretch (low complexity) spans 75 to 91 (LAAEEASSPSSDSDSSL). The interaction with UBE2I stretch occupies residues 79-144 (EASSPSSDSD…ASHGVQAVSE (66 aa)). A compositionally biased stretch (basic and acidic residues) spans 94-103 (PRHDRGEKEI). The PXLXP motif, interaction with host ZMYND11 motif lies at 104-108 (PGLKW). Residues 113-117 (LRCYE) carry the LXCXE motif, interaction with host RB1 and TMEM173/STING motif. The segment at 158-178 (CKSCEFHRINTGDKAVLCALC) is a zinc-finger region. A disordered region spans residues 191-221 (VSDADDETPTTESTLSPPEIGTSPSDNIVRP). Residues 200 to 209 (TTESTLSPPE) show a composition bias toward low complexity. Residues 246–250 (PLDLC) carry the PXDLS motif, CTBP-binding motif. The short motif at 252 to 257 (RKRPRH) is the Nuclear localization signal element.

The protein belongs to the adenoviridae E1A protein family. As to quaternary structure, interacts with host UBE2I; this interaction interferes with polySUMOylation. Interacts with host RB1; this interaction induces the aberrant dissociation of RB1-E2F1 complex thereby disrupting the activity of RB1 and activating E2F1-regulated genes. Interacts with host ATF7; the interaction enhances ATF7-mediated viral transactivation activity which requires the zinc binding domains of both proteins. Isoform early E1A 32 kDa protein and isoform early E1A 26 kDa protein interact (via N-terminus) with CUL1 and E3 ubiquitin ligase RBX1; these interactions inhibit RBX1-CUL1-dependent elongation reaction of ubiquitin chains and attenuate ubiquitination of SCF(FBXW7) target proteins. Interacts (via PXLXP motif) with host ZMYND11/BS69 (via MYND-type zinc finger); this interaction inhibits E1A mediated transactivation. Interacts with host EP300; this interaction stimulates the acetylation of RB1 by recruiting EP300 and RB1 into a multimeric-protein complex. Interacts with host CTBP1 and CTBP2; this interaction seems to potentiate viral replication. Interacts with host DCAF7. Interacts with host DYRK1A. Interacts with host KPNA4; this interaction allows E1A import into the host nucleus. Interacts with host EP400; this interaction stabilizes MYC. Interacts with host TBP protein; this interaction probably disrupts the TBP-TATA complex. Interacts (via LXCXE motif) with host TMEM173/STING; this interaction impairs the ability of TMEM173/STING to sense cytosolic DNA and promote the production of type I interferon (IFN-alpha and IFN-beta). Interacts (via C-terminus) with host ZBED1/hDREF (via C-terminus); the interaction is direct.

It localises to the host nucleus. In terms of biological role, plays a role in viral genome replication by driving entry of quiescent cells into the cell cycle. Stimulation of progression from G1 to S phase allows the virus to efficiently use the cellular DNA replicating machinery to achieve viral genome replication. E1A protein has both transforming and trans-activating activities. Induces the disassembly of the E2F1 transcription factor from RB1 by direct competition for the same binding site on RB1, with subsequent transcriptional activation of E2F1-regulated S-phase genes and of the E2 region of the adenoviral genome. Release of E2F1 leads to the ARF-mediated inhibition of MDM2 and causes TP53/p53 to accumulate because it is not targeted for degradation by MDM2-mediated ubiquitination anymore. This increase in TP53, in turn, would arrest the cell proliferation and direct its death but this effect is counteracted by the viral protein E1B-55K. Inactivation of the ability of RB1 to arrest the cell cycle is critical for cellular transformation, uncontrolled cellular growth and proliferation induced by viral infection. Interaction with RBX1 and CUL1 inhibits ubiquitination of the proteins targeted by SCF(FBXW7) ubiquitin ligase complex, and may be linked to unregulated host cell proliferation. The tumorigenesis-restraining activity of E1A may be related to the disruption of the host CtBP-CtIP complex through the CtBP binding motif. Interaction with host TMEM173/STING impairs the ability of TMEM173/STING to sense cytosolic DNA and promote the production of type I interferon (IFN-alpha and IFN-beta). Promotes the sumoylation of host ZBED1/hDREF with SUMO1. The protein is Early E1A protein of Human adenovirus E serotype 4 (HAdV-4).